Consider the following 304-residue polypeptide: Elongation factor Ts (304 aa).

The tract at residues 80–83 is involved in Mg(2+) ion dislocation from EF-Tu; the sequence is TDFV.

It belongs to the EF-Ts family.

Its subcellular location is the cytoplasm. Its function is as follows. Associates with the EF-Tu.GDP complex and induces the exchange of GDP to GTP. It remains bound to the aminoacyl-tRNA.EF-Tu.GTP complex up to the GTP hydrolysis stage on the ribosome. The polypeptide is Elongation factor Ts (Clostridium tetani (strain Massachusetts / E88)).